Reading from the N-terminus, the 88-residue chain is Small ribosomal subunit protein bS20 (88 aa).

The disordered stretch occupies residues 1–20 (MANIKQQKKRNKTNEKRRLR).

This sequence belongs to the bacterial ribosomal protein bS20 family.

In terms of biological role, binds directly to 16S ribosomal RNA. The sequence is that of Small ribosomal subunit protein bS20 from Phytoplasma australiense.